The following is a 265-amino-acid chain: Hemin import ATP-binding protein HmuV (265 aa).

The 237-residue stretch at leucine 13–proline 249 folds into the ABC transporter domain. ATP is bound at residue glycine 45–serine 52.

This sequence belongs to the ABC transporter superfamily. Heme (hemin) importer (TC 3.A.1.14.5) family. The complex is composed of two ATP-binding proteins (HmuV), two transmembrane proteins (HmuU) and a solute-binding protein (HmuT).

It localises to the cell inner membrane. Part of the ABC transporter complex HmuTUV involved in hemin import. Responsible for energy coupling to the transport system. The polypeptide is Hemin import ATP-binding protein HmuV (Photobacterium damsela subsp. piscicida (Pasteurella piscicida)).